Here is a 510-residue protein sequence, read N- to C-terminus: GPI mannosyltransferase 3 (510 aa).

The next 7 helical transmembrane spans lie at 17-37, 96-116, 123-143, 145-163, 179-199, 221-241, and 269-289; these read TVLV…KTFF, IAPK…TWKL, PAEA…WFFL, RTFS…LNYW, LFIG…WAVL, VALV…EPVF, and YEAL…GLWI. N290 carries N-linked (GlcNAc...) asparagine glycosylation. Helical transmembrane passes span 316–336 and 342–362; these read FIYP…TQTP and WLVW…SQVH.

This sequence belongs to the glycosyltransferase 22 family. PIGB subfamily.

It localises to the endoplasmic reticulum membrane. The protein operates within glycolipid biosynthesis; glycosylphosphatidylinositol-anchor biosynthesis. In terms of biological role, mannosyltransferase involved in glycosylphosphatidylinositol-anchor biosynthesis. Transfers the third mannose to Man2-GlcN-acyl-PI during GPI precursor assembly. The sequence is that of GPI mannosyltransferase 3 (GPI10) from Yarrowia lipolytica (strain CLIB 122 / E 150) (Yeast).